The following is a 291-amino-acid chain: Kidney mitochondrial carrier protein 1 (291 aa).

Position 2 is an N-acetylserine (S2). 3 Solcar repeats span residues 7-96 (KPFV…LKRL), 104-189 (ETLP…TKKH), and 198-289 (DTVY…LKKL). The next 6 membrane-spanning stretches (helical) occupy residues 9 to 26 (FVYG…TFPI), 71 to 89 (GIAP…KIGT), 105 to 124 (TLPI…STIA), 164 to 183 (GVSL…LPVY), 204 to 224 (FLSS…VDVV), and 264 to 283 (GFWP…FVTY).

This sequence belongs to the mitochondrial carrier (TC 2.A.29) family. In terms of assembly, interacts with VDAC1.

The protein resides in the mitochondrion inner membrane. The catalysed reaction is sulfite(in) + sulfate(out) = sulfite(out) + sulfate(in). The enzyme catalyses thiosulfate(in) + sulfate(out) = thiosulfate(out) + sulfate(in). It catalyses the reaction sulfate(out) + phosphate(in) = sulfate(in) + phosphate(out). It carries out the reaction oxalate(in) + sulfate(out) = oxalate(out) + sulfate(in). The catalysed reaction is malonate(in) + sulfate(out) = malonate(out) + sulfate(in). The enzyme catalyses maleate(in) + sulfate(out) = maleate(out) + sulfate(in). It catalyses the reaction (S)-malate(in) + sulfate(out) = (S)-malate(out) + sulfate(in). It carries out the reaction (3S)-citramalate(in) + sulfate(out) = (3S)-citramalate(out) + sulfate(in). The catalysed reaction is (3R)-citramalate(in) + sulfate(out) = (3R)-citramalate(out) + sulfate(in). The enzyme catalyses sulfate(out) + succinate(in) = sulfate(in) + succinate(out). It catalyses the reaction (S,S)-tartrate(in) + sulfate(out) = (S,S)-tartrate(out) + sulfate(in). It carries out the reaction (2R,3R)-tartrate(in) + sulfate(out) = (2R,3R)-tartrate(out) + sulfate(in). The catalysed reaction is D-aspartate(in) + sulfate(out) = D-aspartate(out) + sulfate(in). The enzyme catalyses L-aspartate(in) + sulfate(out) = L-aspartate(out) + sulfate(in). It catalyses the reaction sulfate(in) = sulfate(out). It carries out the reaction phosphate(in) = phosphate(out). The catalysed reaction is (S)-malate(out) = (S)-malate(in). Increased activity at pH 6.0. sulfate/sulfate exchange activity is inhibited strongly by pyridoxal 5'-phosphate, bathophenanthroline and the organic mercurials mersalyl, p-chloromercuribenzoate and HgCl2. Functionally, antiporter that transports inorganic anions (sulfate, sulfite, thiosulfate and phosphate) and, to a lesser extent, a variety of dicarboxylates (e.g. malonate, malate and citramalate) and, even more so, aspartate. The sulfate/sulfate exchange is much higher than the phosphate/phosphate and malate/malate exchanges. The transport affinities is higher for sulfate and thiosulfate than for any other substrate. May catalyze the export of sulfite and thiosulfate (the hydrogen sulfide degradation products) from the mitochondria, thereby modulating the level of the hydrogen sulfide. Also may mediate a very low unidirectional transport of sulfate, phosphate and (S)-malate. The sequence is that of Kidney mitochondrial carrier protein 1 from Homo sapiens (Human).